Consider the following 460-residue polypeptide: Ammonium transporter Rh type B (460 aa).

Over 1–10 (MTGYSTNMRI) the chain is Cytoplasmic. Residues 11–31 (KLPVFCLLLEFITIILFAVFV) traverse the membrane as a helical segment. Residues 32–62 (RYDHESDAKQWHDEMRNHSVQNAENDFYFRY) lie on the Extracellular side of the membrane. Residue asparagine 48 is glycosylated (N-linked (GlcNAc...) asparagine). The helical transmembrane segment at 63–83 (PSFQDVHVMIFIGFGFLMTFL) threads the bilayer. Residues 84–87 (KRYG) lie on the Cytoplasmic side of the membrane. A helical membrane pass occupies residues 88-108 (FSSVAFNFLIAAFGLQWSTLI). The Extracellular segment spans residues 109-125 (QGFFHGFHDGKIHVGIE). The helical transmembrane segment at 126–146 (SMINADFCTGAVLISFGAVLG) threads the bilayer. The Cytoplasmic segment spans residues 147 to 150 (KTSP). A helical membrane pass occupies residues 151 to 171 (VQLIVMTLIEVTLFGINEYII). Topologically, residues 172 to 179 (LNIVGAKD) are extracellular. Residues 180 to 202 (AGGSMTIHTFGAYFGLIVSRVLY) form a helical membrane-spanning segment. Residues 203 to 220 (RDDLEKSRQREGSVYHSD) are Cytoplasmic-facing. Residues 221–241 (LFAMIGTIYLWMFWPSFNSAI) traverse the membrane as a helical segment. At 242-252 (TAHGDDQHRTV) the chain is on the extracellular side. A helical membrane pass occupies residues 253–273 (MNTYYSLAACTLATFGFSALL). Residues 274 to 283 (NGEGKLDMVH) are Cytoplasmic-facing. Residues 284 to 304 (IQNAALAGGVAVGTSGEMMLT) traverse the membrane as a helical segment. Position 305 (proline 305) is a topological domain, extracellular. The helical transmembrane segment at 306–326 (FGAMIAGTLAGMISVLGYKYL) threads the bilayer. Residues 327 to 347 (TPVLDSKLKIQDTCGVHNLHG) are Cytoplasmic-facing. The helical transmembrane segment at 348–368 (MPGILGALIGAIVALFATAEI) threads the bilayer. At 369 to 394 (YGAGMEDVFPLISDGSRTAKQQSLYQ) the chain is on the extracellular side. A helical transmembrane segment spans residues 395–415 (FLALLVALGFAILGGLVVGFI). Over 416 to 460 (LKLPIFGTPSDAECFEDAVYWEVPGGEGHQQLTVVINNEDPDTQA) the chain is Cytoplasmic.

The protein belongs to the ammonium transporter (TC 2.A.49) family. Rh subfamily.

It is found in the basolateral cell membrane. The protein localises to the cytoplasmic vesicle membrane. Functions as a specific ammonium transporter. This Xenopus tropicalis (Western clawed frog) protein is Ammonium transporter Rh type B (rhbg).